The sequence spans 1307 residues: Light-sensor Protein kinase (1307 aa).

Residues 215-394 (DIELLCDTIV…VFGMQLNLHV (180 aa)) form the GAF domain. A phytochromobilin-binding site is contributed by cysteine 320. Residues 609–680 (LANEMSRVLE…RLLSLALQGE (72 aa)) form the PAS domain. The PAC domain maps to 683 to 739 (QNVEIKLKTFGTQTTERAVILIVNACCSRDASDFVVGVFFVGQDVTEQRMFMDRFTR). The tract at residues 779–1003 (DHATGSVERL…WSFSEKFFQW (225 aa)) is hinge. The region spanning 1004 to 1307 (IQITGSLGSG…DSYPSTEEPS (304 aa)) is the Protein kinase domain. ATP contacts are provided by residues 1010-1018 (LGSGSSATV) and lysine 1031. Residue aspartate 1127 is part of the active site.

It in the N-terminal section; belongs to the phytochrome family. In the C-terminal section; belongs to the protein kinase superfamily. Ser/Thr protein kinase family. In terms of assembly, homodimer. In terms of processing, contains one covalently linked phytochromobilin chromophore.

It localises to the cell membrane. It catalyses the reaction L-seryl-[protein] + ATP = O-phospho-L-seryl-[protein] + ADP + H(+). It carries out the reaction L-threonyl-[protein] + ATP = O-phospho-L-threonyl-[protein] + ADP + H(+). In terms of biological role, regulatory photoreceptor which exists in two forms that are reversibly interconvertible by light: the Pr form that absorbs maximally in the red region of the spectrum and the Pfr form that absorbs maximally in the far-red region. Photoconversion of Pr to Pfr induces an array of morphogenic responses, whereas reconversion of Pfr to Pr cancels the induction of those responses. Pfr controls the expression of a number of nuclear genes including those encoding the small subunit of ribulose-bisphosphate carboxylase, chlorophyll A/B binding protein, protochlorophyllide reductase, rRNA, etc. It also controls the expression of its own gene(s) in a negative feedback fashion. The chain is Light-sensor Protein kinase (PHY1) from Ceratodon purpureus (Fire moss).